The primary structure comprises 95 residues: Large ribosomal subunit protein eL37z (95 aa).

Zn(2+) is bound by residues Cys-19, Cys-22, Cys-34, and Cys-37. A C4-type zinc finger spans residues 19–37 (CVRCGRRSFHIQKSRCSAC).

The protein belongs to the eukaryotic ribosomal protein eL37 family. The cofactor is Zn(2+).

In terms of biological role, binds to the 23S rRNA. The polypeptide is Large ribosomal subunit protein eL37z (RPL37A) (Arabidopsis thaliana (Mouse-ear cress)).